We begin with the raw amino-acid sequence, 1358 residues long: Probable aldehyde oxidase 1 (1358 aa).

One can recognise a 2Fe-2S ferredoxin-type domain in the interval 4–91 (AAAVVAVNGE…HCAVTTSEGI (88 aa)). Cys43, Cys48, Cys51, and Cys73 together coordinate [2Fe-2S] cluster. In terms of domain architecture, FAD-binding PCMH-type spans 236–418 (AVTGDGCWFH…ISISIPDWCS (183 aa)). Residues 540–567 (KPENANNVPNGSCTTNGTTNGSAESTVD) are disordered. Residues 549 to 561 (NGSCTTNGTTNGS) are compositionally biased toward low complexity.

It belongs to the xanthine dehydrogenase family. Aldehyde oxidases (AO) are homodimers and heterodimers of AO subunits. It depends on [2Fe-2S] cluster as a cofactor. FAD serves as cofactor. The cofactor is Mo-molybdopterin.

The catalysed reaction is an aldehyde + O2 + H2O = a carboxylate + H2O2 + H(+). This chain is Probable aldehyde oxidase 1, found in Oryza sativa subsp. japonica (Rice).